The primary structure comprises 445 residues: tRNA(Ile)-lysidine synthase (445 aa).

38–43 (SGGLDS) contributes to the ATP binding site.

It belongs to the tRNA(Ile)-lysidine synthase family.

It localises to the cytoplasm. The enzyme catalyses cytidine(34) in tRNA(Ile2) + L-lysine + ATP = lysidine(34) in tRNA(Ile2) + AMP + diphosphate + H(+). Its function is as follows. Ligates lysine onto the cytidine present at position 34 of the AUA codon-specific tRNA(Ile) that contains the anticodon CAU, in an ATP-dependent manner. Cytidine is converted to lysidine, thus changing the amino acid specificity of the tRNA from methionine to isoleucine. The sequence is that of tRNA(Ile)-lysidine synthase from Neisseria gonorrhoeae (strain ATCC 700825 / FA 1090).